The primary structure comprises 148 residues: UPF0179 protein Mpal_0949 (148 aa).

It belongs to the UPF0179 family.

This Methanosphaerula palustris (strain ATCC BAA-1556 / DSM 19958 / E1-9c) protein is UPF0179 protein Mpal_0949.